Consider the following 86-residue polypeptide: Large ribosomal subunit protein bL27 (86 aa).

A disordered region spans residues 1 to 24; the sequence is MAHKKGTGSTRNGRDSNSKRLGVK.

This sequence belongs to the bacterial ribosomal protein bL27 family.

This is Large ribosomal subunit protein bL27 from Prochlorococcus marinus (strain MIT 9312).